Consider the following 297-residue polypeptide: Dipicolinate synthase subunit A (297 aa).

Residues 164-165 (RT), Arg185, Thr203, 242-244 (LAS), and 264-267 (APGL) contribute to the NADP(+) site.

In terms of assembly, dipicolinate synthase likely consists of DpaA and DpaB, since both proteins are required for DPA synthesis.

The enzyme catalyses (S)-2,3-dihydrodipicolinate + NADP(+) = dipicolinate + NADPH + H(+). Functionally, together with DpaB, catalyzes the conversion of dihydrodipicolinate to dipicolinate (DPA), which constitutes up to 10% of the dry weight of the spore. The protein is Dipicolinate synthase subunit A (dpaA) of Bacillus subtilis (strain 168).